Reading from the N-terminus, the 237-residue chain is Ribosomal RNA large subunit methyltransferase E (237 aa).

The S-adenosyl-L-methionine site is built by Gly-76, Trp-78, Asp-99, Asp-115, and Asp-139. The active-site Proton acceptor is Lys-179.

Belongs to the class I-like SAM-binding methyltransferase superfamily. RNA methyltransferase RlmE family.

The protein resides in the cytoplasm. The enzyme catalyses uridine(2552) in 23S rRNA + S-adenosyl-L-methionine = 2'-O-methyluridine(2552) in 23S rRNA + S-adenosyl-L-homocysteine + H(+). In terms of biological role, specifically methylates the uridine in position 2552 of 23S rRNA at the 2'-O position of the ribose in the fully assembled 50S ribosomal subunit. The polypeptide is Ribosomal RNA large subunit methyltransferase E (Rhodopseudomonas palustris (strain ATCC BAA-98 / CGA009)).